Here is a 523-residue protein sequence, read N- to C-terminus: MNQPCNSMEPRVMDDDMLKLAVGDQGPQEEAGQLAKQEGILFKDVLSLQLDFRNILRIDNLWQFENLRKLQLDNNIIEKIEGLENLAHLVWLDLSFNNIETIEGLDTLVNLEDLSLFNNRISKIDSLDALVKLQVLSLGNNRIDNMMNIIYLRRFKCLRTLSLSRNPISEAEDYKMFICAYLPDLMYLDYRRIDDHTKKLAEAKHQYSIDELKHQENLMQAQLEDEQAQREELEKHKTAFVEHLNGSFLFDSMYAEDSEGNNLSYLPGVGELLETYKDKFVIICVNIFEYGLKQQEKRKTELDTFSECVREAIQENQEQGKRKIAKFEEKHLSSLSAIREELELPNIEKMILECSADISELFDALMTLEMQLVEQLEETINMFERNIVDMVGLFIENVQSLMAQCRDLENHHHEKLLEISISTLEKIVEGDLDEDLPNDLRALFVDKDTIVNAVGASHDIHLLKIDNREDELVTRINSWCTRLIDRIHKDEIMRNRKRVKEINQYIDHMQSELDNLECGDILD.

LRR repeat units lie at residues 44-65 (DVLS…WQFE), 66-87 (NLRK…ENLA), 88-109 (HLVW…DTLV), 110-131 (NLED…DALV), and 132-153 (KLQV…IYLR). The 39-residue stretch at 166–204 (NPISEAEDYKMFICAYLPDLMYLDYRRIDDHTKKLAEAK) folds into the LRRCT domain. Coiled coils occupy residues 208–242 (SIDE…AFVE) and 366–391 (MTLE…VDMV).

Belongs to the DRC3 family. In terms of assembly, component of the nexin-dynein regulatory complex (N-DRC). Interacts with DRC1. Interacts with TCTE1/DRC5. Interacts with DRC7.

The protein localises to the cytoplasm. Its subcellular location is the cytoskeleton. The protein resides in the cilium axoneme. It localises to the cell projection. It is found in the cilium. The protein localises to the flagellum axoneme. Its subcellular location is the flagellum. Functionally, component of the nexin-dynein regulatory complex (N-DRC) a key regulator of ciliary/flagellar motility which maintains the alignment and integrity of the distal axoneme and regulates microtubule sliding in motile axonemes. The sequence is that of Dynein regulatory complex subunit 3 (DRC3) from Homo sapiens (Human).